A 392-amino-acid chain; its full sequence is Formate-dependent phosphoribosylglycinamide formyltransferase (392 aa).

N(1)-(5-phospho-beta-D-ribosyl)glycinamide-binding positions include 22–23 (EL) and Glu-82. Residues Arg-114, Lys-155, 160–165 (SSGKGQ), 195–198 (EGLV), and Glu-203 each bind ATP. Positions 119 to 308 (RLAAETLGVP…EFALHVRAFL (190 aa)) constitute an ATP-grasp domain. The Mg(2+) site is built by Glu-267 and Glu-279. N(1)-(5-phospho-beta-D-ribosyl)glycinamide contacts are provided by residues Asp-286, Lys-355, and 362 to 363 (RR).

The protein belongs to the PurK/PurT family. Homodimer.

It carries out the reaction N(1)-(5-phospho-beta-D-ribosyl)glycinamide + formate + ATP = N(2)-formyl-N(1)-(5-phospho-beta-D-ribosyl)glycinamide + ADP + phosphate + H(+). It functions in the pathway purine metabolism; IMP biosynthesis via de novo pathway; N(2)-formyl-N(1)-(5-phospho-D-ribosyl)glycinamide from N(1)-(5-phospho-D-ribosyl)glycinamide (formate route): step 1/1. Involved in the de novo purine biosynthesis. Catalyzes the transfer of formate to 5-phospho-ribosyl-glycinamide (GAR), producing 5-phospho-ribosyl-N-formylglycinamide (FGAR). Formate is provided by PurU via hydrolysis of 10-formyl-tetrahydrofolate. This Pectobacterium carotovorum subsp. carotovorum (strain PC1) protein is Formate-dependent phosphoribosylglycinamide formyltransferase.